The chain runs to 396 residues: Inositol hexakisphosphate kinase 3 (396 aa).

206–214 (PCILDLKMG) lines the substrate pocket.

Belongs to the inositol phosphokinase (IPK) family. Highly expressed in cerebellum, brain cortex, kidney, thymus and lung. Detected at lower levels in hippocampus, testis, heart and olfactory bulb.

It is found in the cytoplasm. It catalyses the reaction 1D-myo-inositol hexakisphosphate + ATP = 5-diphospho-1D-myo-inositol 1,2,3,4,6-pentakisphosphate + ADP. It carries out the reaction 1-diphospho-1D-myo-inositol 2,3,4,5,6-pentakisphosphate + ATP + H(+) = 1,5-bis(diphospho)-1D-myo-inositol 2,3,4,6-tetrakisphosphate + ADP. Converts inositol hexakisphosphate (InsP6) to diphosphoinositol pentakisphosphate (InsP7/PP-InsP5). Converts 1,3,4,5,6-pentakisphosphate (InsP5) to PP-InsP4. The sequence is that of Inositol hexakisphosphate kinase 3 (Ip6k3) from Mus musculus (Mouse).